A 273-amino-acid chain; its full sequence is NAD(P)H-hydrate epimerase (273 aa).

The 240-residue stretch at 18 to 257 (ALKLDEDLIN…LLAMEYDVQE (240 aa)) folds into the YjeF N-terminal domain. Position 71–75 (71–75 (NNGGD)) interacts with (6S)-NADPHX. K(+) is bound by residues N72 and D146. (6S)-NADPHX is bound by residues 150-157 (GFSFHGGP), Y162, and D188. S191 lines the K(+) pocket.

The protein belongs to the NnrE/AIBP family. K(+) serves as cofactor.

The catalysed reaction is (6R)-NADHX = (6S)-NADHX. It carries out the reaction (6R)-NADPHX = (6S)-NADPHX. Functionally, catalyzes the epimerization of the S- and R-forms of NAD(P)HX, a damaged form of NAD(P)H that is a result of enzymatic or heat-dependent hydration. This is a prerequisite for the S-specific NAD(P)H-hydrate dehydratase to allow the repair of both epimers of NAD(P)HX. This chain is NAD(P)H-hydrate epimerase, found in Giardia intestinalis (strain ATCC 50803 / WB clone C6) (Giardia lamblia).